A 242-amino-acid polypeptide reads, in one-letter code: Sugar fermentation stimulation protein homolog (242 aa).

The protein belongs to the SfsA family.

This is Sugar fermentation stimulation protein homolog from Nitratidesulfovibrio vulgaris (strain DP4) (Desulfovibrio vulgaris).